The following is a 132-amino-acid chain: Pro-MCH 1 (132 aa).

The N-terminal stretch at 1 to 24 is a signal peptide; that stretch reads MRHYVLSISFAVALFLECYTPSTA. A disulfide bridge connects residues cysteine 120 and cysteine 129.

This sequence belongs to the melanin-concentrating hormone family. As to expression, pituitary gland. Produced in neurons of lateral basal hypothalamus which project both to the brain and to the neural lobe of the pituitary gland from where MCH is released.

Its function is as follows. Plays a role in skin pigmentation by antagonizing the action of melanotropin alpha. Induces melanin concentration within the melanophores. May participate in the control of the hypothalamo-pituitary adrenal gland axis by inhibiting the release of ACTH. In Oncorhynchus keta (Chum salmon), this protein is Pro-MCH 1 (mch1).